The sequence spans 129 residues: Nif-specific regulatory protein (129 aa).

Residues 1-46 form the Sigma-54 factor interaction domain; it reads EFLLTKIGRQQGRPLTVTDSAIRLLMSHRWPGNVRDVENCLERSAI. The H-T-H motif DNA-binding region spans 101-129; it reads QAKAARLLGMTPRQIAYRIQTLNIHMRKI.

Interacts with sigma-54.

Its function is as follows. Required for activation of most nif operons, which are directly involved in nitrogen fixation. The chain is Nif-specific regulatory protein (nifA) from Azotobacter chroococcum mcd 1.